A 253-amino-acid polypeptide reads, in one-letter code: Transposase for insertion sequence element IS904 (253 aa).

In terms of domain architecture, Integrase catalytic spans 90 to 253 (KATAPNKVWL…SPKDFEKYNS (164 aa)).

This sequence belongs to the transposase IS3/IS150/IS904 family.

Involved in the transposition of the insertion sequence. This chain is Transposase for insertion sequence element IS904 (nisX1), found in Lactococcus lactis subsp. lactis (strain IL1403) (Streptococcus lactis).